Here is an 849-residue protein sequence, read N- to C-terminus: Membrane protein-large ribosomal subunit bL9 fusion protein (849 aa).

The unknown stretch occupies residues 1-680 (MFSKNKHNTK…TQLEGTNIKT (680 aa)). Transmembrane regions (helical) follow at residues 11 to 31 (FIVI…LDFQ) and 64 to 84 (IIFF…VISF). The GGDEF domain occupies 214–342 (KTLALAMITF…GGDQVVVNIE (129 aa)). The interval 681–849 (VTDTLKHFLK…FLNVTERKSK (169 aa)) is large ribosomal subunit protein bL9.

It belongs to the bacterial ribosomal protein bL9 family.

Its subcellular location is the cell membrane. In terms of biological role, binds to the 23S rRNA. The sequence is that of Membrane protein-large ribosomal subunit bL9 fusion protein from Onion yellows phytoplasma (strain OY-M).